Here is a 341-residue protein sequence, read N- to C-terminus: MFEKNFPIISVQKVNKEIGNHRILNDISFSVFPGEIFGIIGHSGSGKSTLLRCLDFLVSPTSGSISVAGFHNLHSDKTNSRLAFAKRVAYISQSCGLFSAKTVFENIVYPLKLHYPDMTKSLIEEKVDNALDFLNLYERKHAYPSRLSGGQKQKVAIAIAIVSDPVVLLCDEITSALDPRSTEDVTDKLLKLNEERGITQVFVSHEIEVVKKLCCQTLVMHQGAIEELGPTEKLFLNPRSSITEELFHMNSIAKGIYNHGENEEILRLGFSQGLAVQGMISKLIQDGQISINILSGDINLFRKVPLGFLIIALSGDKEEREKAKDILIKKGVIIQQLQKTK.

An ABC transporter domain is found at 9–247 (ISVQKVNKEI…PRSSITEELF (239 aa)). 41 to 48 (GHSGSGKS) is a binding site for ATP.

Belongs to the ABC transporter superfamily. Methionine importer (TC 3.A.1.24) family. The complex is composed of two ATP-binding proteins (MetN), two transmembrane proteins (MetI) and a solute-binding protein (MetQ).

Its subcellular location is the cell inner membrane. It carries out the reaction L-methionine(out) + ATP + H2O = L-methionine(in) + ADP + phosphate + H(+). It catalyses the reaction D-methionine(out) + ATP + H2O = D-methionine(in) + ADP + phosphate + H(+). Part of the ABC transporter complex MetNIQ involved in methionine import. Responsible for energy coupling to the transport system. This Chlamydia caviae (strain ATCC VR-813 / DSM 19441 / 03DC25 / GPIC) (Chlamydophila caviae) protein is Methionine import ATP-binding protein MetN.